Reading from the N-terminus, the 209-residue chain is Thymidylate kinase (209 aa).

Position 13–20 (13–20 (GLEGAGKS)) interacts with ATP.

Belongs to the thymidylate kinase family.

The catalysed reaction is dTMP + ATP = dTDP + ADP. In terms of biological role, phosphorylation of dTMP to form dTDP in both de novo and salvage pathways of dTTP synthesis. This Shewanella sp. (strain ANA-3) protein is Thymidylate kinase.